Here is a 1287-residue protein sequence, read N- to C-terminus: Vacuolating cytotoxin autotransporter (1287 aa).

Positions 1–33 (MEIQQTHRKINRPLVSLALVGALVSITPQQSHA) are cleaved as a signal peptide. A disordered region spans residues 326 to 381 (PPEGGYKDKPNNTPSQSGAKNDKQESSQNNSNTQVINPPNSTQKTEVQPTQVIDGP). Over residues 351–376 (SSQNNSNTQVINPPNSTQKTEVQPTQ) the composition is skewed to polar residues. An Autotransporter domain is found at 1014 to 1287 (KYEKPTNVWA…ASNLGMRYSF (274 aa)).

It localises to the periplasm. Its subcellular location is the secreted. The protein localises to the cell surface. It is found in the cell outer membrane. Induces vacuolation of eukaryotic cells. Causes ulceration and gastric lesions. This chain is Vacuolating cytotoxin autotransporter (vacA), found in Helicobacter pylori (Campylobacter pylori).